The primary structure comprises 380 residues: Lipid-A-disaccharide synthase (380 aa).

This sequence belongs to the LpxB family.

It carries out the reaction a lipid X + a UDP-2-N,3-O-bis[(3R)-3-hydroxyacyl]-alpha-D-glucosamine = a lipid A disaccharide + UDP + H(+). It functions in the pathway bacterial outer membrane biogenesis; LPS lipid A biosynthesis. In terms of biological role, condensation of UDP-2,3-diacylglucosamine and 2,3-diacylglucosamine-1-phosphate to form lipid A disaccharide, a precursor of lipid A, a phosphorylated glycolipid that anchors the lipopolysaccharide to the outer membrane of the cell. This is Lipid-A-disaccharide synthase from Pseudomonas savastanoi pv. phaseolicola (strain 1448A / Race 6) (Pseudomonas syringae pv. phaseolicola (strain 1448A / Race 6)).